The primary structure comprises 886 residues: Putative leucine-rich repeat receptor-like serine/threonine-protein kinase At2g14440 (886 aa).

A signal peptide spans 1–23; the sequence is METRSKLMLLACATFSIISLVKS. Topologically, residues 24–528 are extracellular; sequence QNQQGFISLY…KHQPKSWLVA (505 aa). N-linked (GlcNAc...) asparagine glycosylation is found at Asn49, Asn69, Asn232, Asn236, Asn259, Asn292, Asn434, Asn447, Asn458, and Asn471. LRR repeat units lie at residues 413–436, 437–460, 461–483, and 485–507; these read RIISLDLSSSGLTGVITPSIQNLT, MLRELDLSNNNLTGVIPPSLQNLT, MLRELDLSNNNLTGEVPEFLATI, and PLLVIHLRGNNLRGSVPQALQDR. Residues 529 to 549 form a helical membrane-spanning segment; it reads IVASISCVAVTIIVLVLIFIF. The Cytoplasmic portion of the chain corresponds to 550–886; the sequence is RRRKSSTRKV…TFISDIPSAR (337 aa). Positions 581 to 850 constitute a Protein kinase domain; that stretch reads NNFEVVLGKG…NMTRVAHELN (270 aa). ATP-binding positions include 587-595 and Lys608; that span reads LGKGGFGVV. Tyr653 carries the post-translational modification Phosphotyrosine. Catalysis depends on Asp705, which acts as the Proton acceptor. Ser739 is modified (phosphoserine). Residues Thr740 and Thr745 each carry the phosphothreonine modification. A Phosphotyrosine modification is found at Tyr753. Positions 863 to 886 are disordered; the sequence is SQDQNSSKSSGHTVTFISDIPSAR. A compositionally biased stretch (polar residues) spans 865 to 878; that stretch reads DQNSSKSSGHTVTF.

It belongs to the protein kinase superfamily. Ser/Thr protein kinase family.

The protein localises to the cell membrane. The enzyme catalyses L-seryl-[protein] + ATP = O-phospho-L-seryl-[protein] + ADP + H(+). It catalyses the reaction L-threonyl-[protein] + ATP = O-phospho-L-threonyl-[protein] + ADP + H(+). The chain is Putative leucine-rich repeat receptor-like serine/threonine-protein kinase At2g14440 from Arabidopsis thaliana (Mouse-ear cress).